Consider the following 120-residue polypeptide: Small ribosomal subunit protein bS6 (120 aa).

Positions 97–112 (SNEPSPILKNQSTENT) are enriched in polar residues. The tract at residues 97-120 (SNEPSPILKNQSTENTPVIDVTAN) is disordered.

This sequence belongs to the bacterial ribosomal protein bS6 family.

In terms of biological role, binds together with bS18 to 16S ribosomal RNA. This Rickettsia bellii (strain RML369-C) protein is Small ribosomal subunit protein bS6.